The primary structure comprises 83 residues: Subtilisin-chymotrypsin inhibitor CI-1B (83 aa).

The disordered stretch occupies residues 1 to 28 (MRSMEGSVPKYPEPTEGSIGASGAKRSW).

It belongs to the protease inhibitor I13 (potato type I serine protease inhibitor) family.

Functionally, inhibits both subtilisin and chymotrypsin. This is Subtilisin-chymotrypsin inhibitor CI-1B from Hordeum vulgare (Barley).